A 639-amino-acid polypeptide reads, in one-letter code: Mediator of RNA polymerase II transcription subunit 17 (639 aa).

A coiled-coil region spans residues 160–187 (RLQSFNAAADKLLKSASRLENEVASETR).

Belongs to the Mediator complex subunit 17 family. As to quaternary structure, component of the Mediator complex.

It localises to the nucleus. Its function is as follows. Component of the Mediator complex, a coactivator involved in the regulated transcription of nearly all RNA polymerase II-dependent genes. Mediator functions as a bridge to convey information from gene-specific regulatory proteins to the basal RNA polymerase II transcription machinery. Mediator is recruited to promoters by direct interactions with regulatory proteins and serves as a scaffold for the assembly of a functional preinitiation complex with RNA polymerase II and the general transcription factors. The chain is Mediator of RNA polymerase II transcription subunit 17 (srb4) from Aspergillus fumigatus (strain ATCC MYA-4609 / CBS 101355 / FGSC A1100 / Af293) (Neosartorya fumigata).